Consider the following 79-residue polypeptide: uncharacterized protein (79 aa).

The signal sequence occupies residues 1–24 (MKMNPCTVILCKSLFFFCLFQVDC). N-linked (GlcNAc...) asparagine glycosylation is present at Asn33.

It localises to the secreted. This is an uncharacterized protein from Saccharomyces cerevisiae (strain ATCC 204508 / S288c) (Baker's yeast).